The sequence spans 279 residues: Pleckstrin homology domain-containing family F member 1 (279 aa).

The region spanning 35–131 is the PH domain; sequence VLLGEGVLTK…WISHIEECVR (97 aa). An FYVE-type zinc finger spans residues 152-212; sequence DKATDICMRC…VCSLCYRELA (61 aa). Residues C158, C161, C175, C178, C183, C186, C204, and C207 each contribute to the Zn(2+) site. Positions 220-263 are disordered; the sequence is AREGIGGSPPQLSHLGGTVCGASSGDDDDSDEDREGNGDGDWPT. Over residues 244 to 253 the composition is skewed to acidic residues; that stretch reads GDDDDSDEDR.

In terms of tissue distribution, widely expressed.

Its subcellular location is the nucleus. It localises to the cytoplasm. The protein localises to the perinuclear region. It is found in the lysosome. Its function is as follows. May induce apoptosis through the lysosomal-mitochondrial pathway. Translocates to the lysosome initiating the permeabilization of lysosomal membrane (LMP) and resulting in the release of CTSD and CTSL to the cytoplasm. Triggers the caspase-independent apoptosis by altering mitochondrial membrane permeabilization (MMP) resulting in the release of PDCD8. This chain is Pleckstrin homology domain-containing family F member 1 (Plekhf1), found in Mus musculus (Mouse).